The primary structure comprises 221 residues: Ependymin-2 (221 aa).

The signal sequence occupies residues 1–21 (MQDFAFAALSIWLCLGATALA). Residues Asn-33, Asn-73, and Asn-97 are each glycosylated (N-linked (GlcNAc...) asparagine).

This sequence belongs to the ependymin family. In terms of processing, binds calcium through the terminal sialic acids. In terms of tissue distribution, EPDs are synthesized in the meninx and secreted in the cerebrospinal fluid.

The protein localises to the secreted. Functionally, may play a role in neural plasticity. May be involved during axon regeneration. This Oncorhynchus mykiss (Rainbow trout) protein is Ependymin-2 (epd2).